The sequence spans 242 residues: Protein crossbronx (242 aa).

Positions Gln-20–Ala-176 constitute a UBC core domain.

Belongs to the ubiquitin-conjugating enzyme family. FTS subfamily.

The sequence is that of Protein crossbronx (cbx) from Drosophila ananassae (Fruit fly).